A 124-amino-acid chain; its full sequence is Small ribosomal subunit protein eS6 (124 aa).

It belongs to the eukaryotic ribosomal protein eS6 family.

The chain is Small ribosomal subunit protein eS6 from Methanococcus maripaludis (strain C7 / ATCC BAA-1331).